The chain runs to 426 residues: Glutamate-1-semialdehyde 2,1-aminomutase (426 aa).

N6-(pyridoxal phosphate)lysine is present on Lys265.

This sequence belongs to the class-III pyridoxal-phosphate-dependent aminotransferase family. HemL subfamily. Homodimer. Requires pyridoxal 5'-phosphate as cofactor.

It is found in the cytoplasm. It carries out the reaction (S)-4-amino-5-oxopentanoate = 5-aminolevulinate. It participates in porphyrin-containing compound metabolism; protoporphyrin-IX biosynthesis; 5-aminolevulinate from L-glutamyl-tRNA(Glu): step 2/2. The chain is Glutamate-1-semialdehyde 2,1-aminomutase from Salmonella paratyphi A (strain ATCC 9150 / SARB42).